The chain runs to 194 residues: Glycerol-3-phosphate acyltransferase (194 aa).

The next 6 helical transmembrane spans lie at 3–23 (AGLF…GLLL), 52–72 (VGIL…LLAW), 80–100 (MQAW…FLLF), 112–132 (VFLA…ILLV), 135–155 (WRYI…IIFF), and 162–182 (LLIA…SNIS).

Belongs to the PlsY family. In terms of assembly, probably interacts with PlsX.

Its subcellular location is the cell inner membrane. The enzyme catalyses an acyl phosphate + sn-glycerol 3-phosphate = a 1-acyl-sn-glycero-3-phosphate + phosphate. It functions in the pathway lipid metabolism; phospholipid metabolism. Catalyzes the transfer of an acyl group from acyl-phosphate (acyl-PO(4)) to glycerol-3-phosphate (G3P) to form lysophosphatidic acid (LPA). This enzyme utilizes acyl-phosphate as fatty acyl donor, but not acyl-CoA or acyl-ACP. The chain is Glycerol-3-phosphate acyltransferase from Trichlorobacter lovleyi (strain ATCC BAA-1151 / DSM 17278 / SZ) (Geobacter lovleyi).